The primary structure comprises 376 residues: Dihydroorotate dehydrogenase (quinone) (376 aa).

FMN-binding positions include 78–82 (AGFDK) and T102. K82 contributes to the substrate binding site. 127-131 (NRMGF) contributes to the substrate binding site. Residues N157 and N190 each coordinate FMN. Residue N190 participates in substrate binding. S193 functions as the Nucleophile in the catalytic mechanism. N195 is a substrate binding site. 2 residues coordinate FMN: K228 and T256. 257–258 (NT) lines the substrate pocket. FMN-binding positions include G286, G315, and 336–337 (YT).

The protein belongs to the dihydroorotate dehydrogenase family. Type 2 subfamily. Monomer. FMN serves as cofactor.

The protein resides in the cell membrane. The catalysed reaction is (S)-dihydroorotate + a quinone = orotate + a quinol. Its pathway is pyrimidine metabolism; UMP biosynthesis via de novo pathway; orotate from (S)-dihydroorotate (quinone route): step 1/1. Catalyzes the conversion of dihydroorotate to orotate with quinone as electron acceptor. The protein is Dihydroorotate dehydrogenase (quinone) of Nostoc sp. (strain PCC 7120 / SAG 25.82 / UTEX 2576).